Here is a 91-residue protein sequence, read N- to C-terminus: DNA-directed RNA polymerase subunit omega (91 aa).

The tract at residues 66-91 (QMPPPLPNFPGAANREATGAEDAAGE) is disordered.

This sequence belongs to the RNA polymerase subunit omega family. In terms of assembly, the RNAP catalytic core consists of 2 alpha, 1 beta, 1 beta' and 1 omega subunit. When a sigma factor is associated with the core the holoenzyme is formed, which can initiate transcription.

It catalyses the reaction RNA(n) + a ribonucleoside 5'-triphosphate = RNA(n+1) + diphosphate. In terms of biological role, promotes RNA polymerase assembly. Latches the N- and C-terminal regions of the beta' subunit thereby facilitating its interaction with the beta and alpha subunits. The protein is DNA-directed RNA polymerase subunit omega of Acidithiobacillus ferrooxidans (strain ATCC 23270 / DSM 14882 / CIP 104768 / NCIMB 8455) (Ferrobacillus ferrooxidans (strain ATCC 23270)).